We begin with the raw amino-acid sequence, 1306 residues long: Putative late blight resistance protein homolog R1A-10 (1306 aa).

2 coiled-coil regions span residues Ser407 to Gln428 and Pro520 to Ser542. In terms of domain architecture, NB-ARC spans Arg521–Gly808. Gly554–Thr561 contributes to the ATP binding site. LRR repeat units lie at residues Ala858–His881, Leu921–Asn935, Phe936–Arg961, Leu979–Met1007, Leu1010–Asp1035, Thr1057–Phe1081, Pro1082–Pro1106, Tyr1110–His1129, Leu1130–Asn1153, Phe1156–Asn1181, and Glu1216–Leu1240. The HMA domain maps to Leu1240–Leu1306.

It belongs to the disease resistance NB-LRR family.

It is found in the cytoplasm. The protein resides in the membrane. Functionally, confers resistance to late blight (Phytophthora infestans) races carrying the avirulence gene Avr1. Resistance proteins guard the plant against pathogens that contain an appropriate avirulence protein via an indirect interaction with this avirulence protein. That triggers a defense system including the hypersensitive response, which restricts the pathogen growth. The protein is Putative late blight resistance protein homolog R1A-10 (R1A-10) of Solanum demissum (Wild potato).